The sequence spans 342 residues: Succinylglutamate desuccinylase (342 aa).

Residues H64, E67, and H159 each coordinate Zn(2+). E222 is a catalytic residue.

It belongs to the AspA/AstE family. Succinylglutamate desuccinylase subfamily. Requires Zn(2+) as cofactor.

It carries out the reaction N-succinyl-L-glutamate + H2O = L-glutamate + succinate. It functions in the pathway amino-acid degradation; L-arginine degradation via AST pathway; L-glutamate and succinate from L-arginine: step 5/5. Functionally, transforms N(2)-succinylglutamate into succinate and glutamate. In Burkholderia orbicola (strain AU 1054), this protein is Succinylglutamate desuccinylase.